A 272-amino-acid chain; its full sequence is HMP-PP phosphatase (272 aa).

The active-site Nucleophile is the Asp-8. Mg(2+)-binding residues include Asp-8, Asp-10, and Asp-212.

It belongs to the HAD-like hydrolase superfamily. Cof family. Mg(2+) is required as a cofactor.

The enzyme catalyses 4-amino-2-methyl-5-(diphosphooxymethyl)pyrimidine + H2O = 4-amino-2-methyl-5-(phosphooxymethyl)pyrimidine + phosphate + H(+). Functionally, catalyzes the hydrolysis of 4-amino-2-methyl-5-hydroxymethylpyrimidine pyrophosphate (HMP-PP) to 4-amino-2-methyl-5-hydroxymethylpyrimidine phosphate (HMP-P). This chain is HMP-PP phosphatase, found in Citrobacter koseri (strain ATCC BAA-895 / CDC 4225-83 / SGSC4696).